A 224-amino-acid chain; its full sequence is 7-cyano-7-deazaguanine synthase (224 aa).

ATP is bound at residue 12 to 22; the sequence is LSGGLDSSTVT. The Zn(2+) site is built by Cys-193, Cys-201, Cys-204, and Cys-207.

It belongs to the QueC family. Zn(2+) is required as a cofactor.

It carries out the reaction 7-carboxy-7-deazaguanine + NH4(+) + ATP = 7-cyano-7-deazaguanine + ADP + phosphate + H2O + H(+). It functions in the pathway purine metabolism; 7-cyano-7-deazaguanine biosynthesis. Its function is as follows. Catalyzes the ATP-dependent conversion of 7-carboxy-7-deazaguanine (CDG) to 7-cyano-7-deazaguanine (preQ(0)). The polypeptide is 7-cyano-7-deazaguanine synthase (Prochlorococcus marinus (strain AS9601)).